The following is a 128-amino-acid chain: Large ribosomal subunit protein bL12 (128 aa).

The protein belongs to the bacterial ribosomal protein bL12 family. As to quaternary structure, homodimer. Part of the ribosomal stalk of the 50S ribosomal subunit. Forms a multimeric L10(L12)X complex, where L10 forms an elongated spine to which 2 to 4 L12 dimers bind in a sequential fashion. Binds GTP-bound translation factors.

Functionally, forms part of the ribosomal stalk which helps the ribosome interact with GTP-bound translation factors. Is thus essential for accurate translation. The protein is Large ribosomal subunit protein bL12 of Corynebacterium glutamicum (strain R).